A 53-amino-acid polypeptide reads, in one-letter code: ATP synthase protein 8 (53 aa).

The chain crosses the membrane as a helical span at residues 9–29 (WLILFFIFSITLVIFNILNYF).

Belongs to the ATPase protein 8 family. F-type ATPases have 2 components, CF(1) - the catalytic core - and CF(0) - the membrane proton channel.

Its subcellular location is the mitochondrion membrane. Mitochondrial membrane ATP synthase (F(1)F(0) ATP synthase or Complex V) produces ATP from ADP in the presence of a proton gradient across the membrane which is generated by electron transport complexes of the respiratory chain. F-type ATPases consist of two structural domains, F(1) - containing the extramembraneous catalytic core and F(0) - containing the membrane proton channel, linked together by a central stalk and a peripheral stalk. During catalysis, ATP synthesis in the catalytic domain of F(1) is coupled via a rotary mechanism of the central stalk subunits to proton translocation. Part of the complex F(0) domain. Minor subunit located with subunit a in the membrane. The chain is ATP synthase protein 8 (mt:ATPase8) from Anopheles quadrimaculatus (Common malaria mosquito).